The chain runs to 564 residues: 2-succinyl-5-enolpyruvyl-6-hydroxy-3-cyclohexene-1-carboxylate synthase (564 aa).

Belongs to the TPP enzyme family. MenD subfamily. In terms of assembly, homodimer. It depends on Mg(2+) as a cofactor. Mn(2+) is required as a cofactor. Thiamine diphosphate serves as cofactor.

It catalyses the reaction isochorismate + 2-oxoglutarate + H(+) = 5-enolpyruvoyl-6-hydroxy-2-succinyl-cyclohex-3-ene-1-carboxylate + CO2. It functions in the pathway quinol/quinone metabolism; 1,4-dihydroxy-2-naphthoate biosynthesis; 1,4-dihydroxy-2-naphthoate from chorismate: step 2/7. The protein operates within quinol/quinone metabolism; menaquinone biosynthesis. Its function is as follows. Catalyzes the thiamine diphosphate-dependent decarboxylation of 2-oxoglutarate and the subsequent addition of the resulting succinic semialdehyde-thiamine pyrophosphate anion to isochorismate to yield 2-succinyl-5-enolpyruvyl-6-hydroxy-3-cyclohexene-1-carboxylate (SEPHCHC). The polypeptide is 2-succinyl-5-enolpyruvyl-6-hydroxy-3-cyclohexene-1-carboxylate synthase (Vibrio vulnificus (strain YJ016)).